The primary structure comprises 830 residues: Ent-cassa-12,15-diene synthase (830 aa).

The interval 1–50 (MMLLGSPSSGGYGGKFAGASPAGGTTTMAPSAKQPSSRAPPPGITGGRND) is disordered. A compositionally biased stretch (polar residues) spans 23-37 (GGTTTMAPSAKQPSS). Mg(2+)-binding residues include Asp-577, Asp-581, Asn-721, and Glu-729. Positions 577–581 (DDLFD) match the DDXXD motif motif.

The protein belongs to the terpene synthase family. It depends on Mg(2+) as a cofactor. Expressed in roots and stems.

It catalyses the reaction ent-copalyl diphosphate = ent-cassa-12,15-diene + diphosphate. Its function is as follows. Involved in phytocassane phytoalexins biosynthesis. Catalyzes the conversion of ent-copalyl diphosphate to the phytoalexin precursor ent-cassa-12,15-diene. The chain is Ent-cassa-12,15-diene synthase (KSL7) from Oryza sativa subsp. indica (Rice).